A 463-amino-acid polypeptide reads, in one-letter code: Phosphomethylpyrimidine synthase (463 aa).

Residues Asn80, Met109, Tyr138, His173, 193–195 (SRG), 234–237 (DGLR), and Glu273 contribute to the substrate site. Zn(2+) is bound at residue His277. Tyr300 contacts substrate. His341 serves as a coordination point for Zn(2+). Cys421, Cys424, and Cys429 together coordinate [4Fe-4S] cluster.

Belongs to the ThiC family. As to quaternary structure, homodimer. It depends on [4Fe-4S] cluster as a cofactor.

It catalyses the reaction 5-amino-1-(5-phospho-beta-D-ribosyl)imidazole + S-adenosyl-L-methionine = 4-amino-2-methyl-5-(phosphooxymethyl)pyrimidine + CO + 5'-deoxyadenosine + formate + L-methionine + 3 H(+). It functions in the pathway cofactor biosynthesis; thiamine diphosphate biosynthesis. In terms of biological role, catalyzes the synthesis of the hydroxymethylpyrimidine phosphate (HMP-P) moiety of thiamine from aminoimidazole ribotide (AIR) in a radical S-adenosyl-L-methionine (SAM)-dependent reaction. The polypeptide is Phosphomethylpyrimidine synthase (Anaeromyxobacter sp. (strain K)).